The following is a 117-amino-acid chain: UPF0342 protein Bcer98_0695 (117 aa).

Belongs to the UPF0342 family.

This Bacillus cytotoxicus (strain DSM 22905 / CIP 110041 / 391-98 / NVH 391-98) protein is UPF0342 protein Bcer98_0695.